The chain runs to 396 residues: Putative ribosomal RNA large subunit methyltransferase YwbD (396 aa).

The region spanning 1-79 (MKLLTLKKAH…KHEQIDQAFF (79 aa)) is the PUA domain.

This sequence belongs to the methyltransferase superfamily. RlmI family.

The protein localises to the cytoplasm. The polypeptide is Putative ribosomal RNA large subunit methyltransferase YwbD (ywbD) (Bacillus subtilis (strain 168)).